Consider the following 491-residue polypeptide: F-box/LRR-repeat protein 7 (491 aa).

Residues 1 to 79 (MGANNGKQYG…GRGSSTSSSS (79 aa)) form a disordered region. Over residues 10 to 26 (GSEGKGSSSISSDVSSS) the composition is skewed to low complexity. The span at 27-55 (TDHTPTKAQKNVATSEDSDLSMRTLSTPS) shows a compositional bias: polar residues. Residues 111-157 (QASIDRLPDHSMVQIFSFLPTNQLCRCARVCRRWYNLAWDPRLWRTI) form the F-box domain. 11 LRR repeats span residues 170–195 (LKVL…TVSG), 196–221 (CRRL…EVSG), 222–247 (CYNI…DVSG), 253–281 (CISL…DMTD), 282–307 (CFVL…YLRR), 308–333 (CVRL…SVSD), 334–359 (CRFV…SIAH), 360–385 (CGRV…NARG), 386–411 (CEGI…DIGK), 412–437 (CPLV…SLKS), and 438–463 (CESI…NVQD).

The protein belongs to the FBXL7 family. As to quaternary structure, part of the SCF (SKP1-CUL1-F-box) E3 ubiquitin-protein ligase complex SCF(FBXL7) composed of CUL1, SKP1, RBX1 and FBXL7. Interacts with AURKA; interaction takes place during mitosis but not in interphase. Interacts with BIRC5; this interaction allows BIRC5 to be polyubiquitinated by the SCF(FBXL7) E3 ubiquitin-protein ligase complex.

It is found in the cytoplasm. The protein resides in the cytoskeleton. The protein localises to the microtubule organizing center. Its subcellular location is the centrosome. It participates in protein modification; protein ubiquitination. Functionally, substrate recognition component of a SCF (SKP1-CUL1-F-box protein) E3 ubiquitin-protein ligase complex. During mitosis, it mediates the ubiquitination and subsequent proteasomal degradation of AURKA, causing mitotic arrest. It also regulates mitochondrial function by mediating the ubiquitination and proteasomal degradation of the apoptosis inhibitor BIRC5. This Homo sapiens (Human) protein is F-box/LRR-repeat protein 7 (FBXL7).